Reading from the N-terminus, the 260-residue chain is HTH-type transcriptional activator FapR (260 aa).

The region spanning 154-251 (ERIVTLLFSD…GVTPKKFEIG (98 aa)) is the HTH araC/xylS-type domain. DNA-binding regions (H-T-H motif) lie at residues 171–192 (SDIAEEMHISEISVRKRLEQEC) and 218–241 (IGMIASLVGYTSVSYFIKTFKEYY).

In terms of assembly, homodimer.

Functionally, positive regulator of the expression of the 987P operon for the fimbrial protein in enterotoxigenic E.coli. This Escherichia coli protein is HTH-type transcriptional activator FapR.